A 61-amino-acid chain; its full sequence is Small ribosomal subunit protein uS14 (61 aa).

Zn(2+)-binding residues include cysteine 24, cysteine 27, cysteine 40, and cysteine 43.

This sequence belongs to the universal ribosomal protein uS14 family. Zinc-binding uS14 subfamily. Part of the 30S ribosomal subunit. Contacts proteins S3 and S10. Requires Zn(2+) as cofactor.

In terms of biological role, binds 16S rRNA, required for the assembly of 30S particles and may also be responsible for determining the conformation of the 16S rRNA at the A site. This is Small ribosomal subunit protein uS14 from Bifidobacterium adolescentis (strain ATCC 15703 / DSM 20083 / NCTC 11814 / E194a).